Consider the following 301-residue polypeptide: Chitin deacetylase 1 (301 aa).

An N-terminal signal peptide occupies residues 1–24; it reads MKIFNTIQSVLFAAFFLKQGNCLA. 3 N-linked (GlcNAc...) asparagine glycosylation sites follow: N26, N50, and N68. A disulfide bond links C107 and C290. The NodB homology domain occupies 108-288; it reads FKLSQTFDDG…LIGSDQLTIA (181 aa). D115 functions as the Proton acceptor in the catalytic mechanism. Residue D115 coordinates acetate. Positions 116, 162, and 166 each coordinate Co(2+). N189 is a glycosylation site (N-linked (GlcNAc...) asparagine). Y203 is a binding site for acetate. The active-site Proton donor is the H263.

This sequence belongs to the polysaccharide deacetylase family. It depends on Co(2+) as a cofactor.

Its subcellular location is the prospore. The catalysed reaction is [(1-&gt;4)-N-acetyl-beta-D-glucosaminyl](n) + n H2O = chitosan + n acetate. Functionally, hydrolyzes the N-acetamido groups of N-acetyl-D-glucosamine residues in chitin to form chitosan and acetate. Chitosan is a component of the spore wall. This is Chitin deacetylase 1 from Saccharomyces cerevisiae (strain ATCC 204508 / S288c) (Baker's yeast).